Reading from the N-terminus, the 145-residue chain is Glycine-rich protein (145 aa).

A signal peptide spans 1–19 (MKLTLAVVVVFAYIATTNA).

Component of the acid-insoluble and acid-soluble organic matrix of calcified layers of the shell (at protein level).

It is found in the secreted. In Lottia gigantea (Giant owl limpet), this protein is Glycine-rich protein.